The primary structure comprises 273 residues: Shikimate kinase (273 aa).

P85–A95 contacts ATP.

This sequence belongs to the GHMP kinase family. Archaeal shikimate kinase subfamily.

The protein localises to the cytoplasm. It catalyses the reaction shikimate + ATP = 3-phosphoshikimate + ADP + H(+). Its pathway is metabolic intermediate biosynthesis; chorismate biosynthesis; chorismate from D-erythrose 4-phosphate and phosphoenolpyruvate: step 5/7. The chain is Shikimate kinase from Pyrococcus furiosus (strain ATCC 43587 / DSM 3638 / JCM 8422 / Vc1).